A 490-amino-acid chain; its full sequence is One cut domain family member 3 (490 aa).

Disordered regions lie at residues glycine 130 to alanine 155, leucine 193 to proline 213, and histidine 287 to glutamate 316. Residues alanine 143–glutamine 152 show a composition bias toward pro residues. Residues histidine 290 to alanine 311 show a composition bias toward gly residues. A DNA-binding region (CUT) is located at residues proline 309–alanine 395. A DNA-binding region (homeobox) is located at residues proline 411–tryptophan 470.

Belongs to the CUT homeobox family. As to expression, specifically expressed in brain, stomach and gut. Within the gut, expressed only in duodenum and jejunum.

Its subcellular location is the nucleus. Transcriptional activator. Binds the consensus DNA sequence 5'-DHWATTGAYTWWD-3' on a variety of gene promoters such as those of HNF3B and TTR. This chain is One cut domain family member 3 (Onecut3), found in Mus musculus (Mouse).